Consider the following 432-residue polypeptide: Enolase (432 aa).

Glutamine 163 contacts (2R)-2-phosphoglycerate. The Proton donor role is filled by glutamate 205. Aspartate 241, glutamate 289, and aspartate 316 together coordinate Mg(2+). (2R)-2-phosphoglycerate is bound by residues lysine 341, arginine 370, serine 371, and lysine 392. Lysine 341 serves as the catalytic Proton acceptor.

Belongs to the enolase family. Mg(2+) serves as cofactor.

Its subcellular location is the cytoplasm. It localises to the secreted. It is found in the cell surface. The enzyme catalyses (2R)-2-phosphoglycerate = phosphoenolpyruvate + H2O. Its pathway is carbohydrate degradation; glycolysis; pyruvate from D-glyceraldehyde 3-phosphate: step 4/5. Catalyzes the reversible conversion of 2-phosphoglycerate (2-PG) into phosphoenolpyruvate (PEP). It is essential for the degradation of carbohydrates via glycolysis. The sequence is that of Enolase from Treponema pallidum (strain Nichols).